A 158-amino-acid chain; its full sequence is NAD(P)H-quinone oxidoreductase subunit N, organellar chromatophore (158 aa).

It belongs to the complex I NdhN subunit family. As to quaternary structure, NDH-1 can be composed of about 15 different subunits; different subcomplexes with different compositions have been identified which probably have different functions.

The protein resides in the plastid. Its subcellular location is the organellar chromatophore thylakoid membrane. It carries out the reaction a plastoquinone + NADH + (n+1) H(+)(in) = a plastoquinol + NAD(+) + n H(+)(out). The enzyme catalyses a plastoquinone + NADPH + (n+1) H(+)(in) = a plastoquinol + NADP(+) + n H(+)(out). NDH-1 shuttles electrons from an unknown electron donor, via FMN and iron-sulfur (Fe-S) centers, to quinones in the respiratory and/or the photosynthetic chain. The immediate electron acceptor for the enzyme in this species is believed to be plastoquinone. Couples the redox reaction to proton translocation, and thus conserves the redox energy in a proton gradient. The polypeptide is NAD(P)H-quinone oxidoreductase subunit N, organellar chromatophore (Paulinella chromatophora).